Here is a 92-residue protein sequence, read N- to C-terminus: Small ribosomal subunit protein uS19 (92 aa).

This sequence belongs to the universal ribosomal protein uS19 family.

Its function is as follows. Protein S19 forms a complex with S13 that binds strongly to the 16S ribosomal RNA. The sequence is that of Small ribosomal subunit protein uS19 from Aliivibrio fischeri (strain ATCC 700601 / ES114) (Vibrio fischeri).